The chain runs to 5085 residues: Linear gramicidin synthase subunit D (5085 aa).

Carrier domains follow at residues 962–1037 (APRT…AAAG), 2023–2097 (SPST…EEKA), 3544–3619 (APRN…ELLT), and 4601–4676 (APQT…EEII). An O-(pantetheine 4'-phosphoryl)serine mark is found at S997, S2058, S3579, and S4636.

Belongs to the ATP-dependent AMP-binding enzyme family. Large multienzyme complex composed of 4 subunits; LgrA, LgrB, LgrC and LgrD. Requires pantetheine 4'-phosphate as cofactor.

Its function is as follows. Activates the 13th to the 16th (Trp, D-Leu, Trp and Gly) amino acids in linear gramicidin and catalyzes the formation of the peptide bond between them. This enzyme is also responsible for the epimerization of the 14th (D-Leu) amino acid. It also catalyzes the NAD(P)H-dependent reduction of the C-terminal glycine residue of the N-formylated 16-mer peptide, that binds to the peptidyl carrier domain of the terminal module of this protein, to form a peptidyl-aldehyde intermediate that is released from the enzyme complex. The sequence is that of Linear gramicidin synthase subunit D (lgrD) from Brevibacillus parabrevis.